A 551-amino-acid chain; its full sequence is Interleukin-2 receptor subunit beta (551 aa).

The signal sequence occupies residues 1–26 (MAAPALSWRLPLLILLLPLATSWASA). Residues 27 to 240 (AVNGTSQFTC…TKPAALGKDT (214 aa)) lie on the Extracellular side of the membrane. 3 N-linked (GlcNAc...) asparagine glycosylation sites follow: Asn29, Asn43, and Asn71. 3 cysteine pairs are disulfide-bonded: Cys36–Cys46, Cys59–Cys110, and Cys74–Cys86. The region spanning 134 to 234 (APISLQVVHV…QPLAFRTKPA (101 aa)) is the Fibronectin type-III domain. Asn149 carries N-linked (GlcNAc...) asparagine glycosylation. The WSXWS motif signature appears at 220 to 224 (WSPWS). The helical transmembrane segment at 241–265 (IPWLGHLLVGLSGAFGFIILVYLLI) threads the bilayer. Residues 266–551 (NCRNTGPWLK…LQGQDPTHLV (286 aa)) are Cytoplasmic-facing. Residues 278–286 (LKCNTPDPS) carry the Box 1 motif motif. 2 disordered regions span residues 389-416 (EEDP…GEDD) and 432-486 (PSLL…VDFQ).

The protein belongs to the type I cytokine receptor family. Type 4 subfamily. Non-covalent dimer of an alpha and a beta subunit. IL2R exists in 3 different forms: a high affinity dimer, an intermediate affinity monomer (beta subunit), and a low affinity monomer (alpha subunit). The high and intermediate affinity forms also associate with a gamma subunit. Interacts with SHB upon interleukin stimulation. In terms of assembly, (Microbial infection) Interacts with HTLV-1 accessory protein p12I.

Its subcellular location is the cell membrane. Its function is as follows. Receptor for interleukin-2. This beta subunit is involved in receptor mediated endocytosis and transduces the mitogenic signals of IL2. Probably in association with IL15RA, involved in the stimulation of neutrophil phagocytosis by IL15. This chain is Interleukin-2 receptor subunit beta, found in Homo sapiens (Human).